The sequence spans 486 residues: Probable glycine dehydrogenase (decarboxylating) subunit 2 (486 aa).

Positions Met-1 to Asp-26 are disordered. Lys-264 is subject to N6-(pyridoxal phosphate)lysine.

This sequence belongs to the GcvP family. C-terminal subunit subfamily. As to quaternary structure, the glycine cleavage system is composed of four proteins: P, T, L and H. In this organism, the P 'protein' is a heterodimer of two subunits. Pyridoxal 5'-phosphate is required as a cofactor.

It carries out the reaction N(6)-[(R)-lipoyl]-L-lysyl-[glycine-cleavage complex H protein] + glycine + H(+) = N(6)-[(R)-S(8)-aminomethyldihydrolipoyl]-L-lysyl-[glycine-cleavage complex H protein] + CO2. Functionally, the glycine cleavage system catalyzes the degradation of glycine. The P protein binds the alpha-amino group of glycine through its pyridoxal phosphate cofactor; CO(2) is released and the remaining methylamine moiety is then transferred to the lipoamide cofactor of the H protein. The polypeptide is Probable glycine dehydrogenase (decarboxylating) subunit 2 (Nitrosococcus oceani (strain ATCC 19707 / BCRC 17464 / JCM 30415 / NCIMB 11848 / C-107)).